We begin with the raw amino-acid sequence, 163 residues long: MSNSNYENIYKAFYCFSEATNSAYSAINTFLELPNVFNKYPAVISLIFSKTATLDSNINNIIKNGVIIYDISTALIGAINTFYKDKKLVNKILKDGQNAIDKLIETTTYLSPIVTDITNSYLVDPYKEENALLFDLQIPNSTSSDYYKLSGTESITLAEIEYY.

This is an uncharacterized protein from Rickettsia conorii (strain ATCC VR-613 / Malish 7).